A 352-amino-acid chain; its full sequence is Chalcone synthase C (352 aa).

C170 is a catalytic residue.

This sequence belongs to the thiolase-like superfamily. Chalcone/stilbene synthases family.

The catalysed reaction is (E)-4-coumaroyl-CoA + 3 malonyl-CoA + 3 H(+) = 2',4,4',6'-tetrahydroxychalcone + 3 CO2 + 4 CoA. It functions in the pathway secondary metabolite biosynthesis; flavonoid biosynthesis. The primary product of this enzyme is 4,2',4',6'-tetrahydroxychalcone (also termed naringenin-chalcone or chalcone) which can under specific conditions spontaneously isomerize into naringenin. The chain is Chalcone synthase C (CHSC) from Ipomoea purpurea (Common morning glory).